We begin with the raw amino-acid sequence, 481 residues long: Threonine synthase (481 aa).

Lys-118 bears the N6-(pyridoxal phosphate)lysine mark.

The protein belongs to the threonine synthase family. Monomer. The cofactor is pyridoxal 5'-phosphate.

It catalyses the reaction O-phospho-L-homoserine + H2O = L-threonine + phosphate. Its pathway is amino-acid biosynthesis; L-threonine biosynthesis; L-threonine from L-aspartate: step 5/5. In terms of biological role, catalyzes the gamma-elimination of phosphate from L-phosphohomoserine and the beta-addition of water to produce L-threonine. This Corynebacterium glutamicum (strain ATCC 13032 / DSM 20300 / JCM 1318 / BCRC 11384 / CCUG 27702 / LMG 3730 / NBRC 12168 / NCIMB 10025 / NRRL B-2784 / 534) protein is Threonine synthase (thrC).